The sequence spans 229 residues: Uracil-DNA glycosylase (229 aa).

Catalysis depends on Asp-70, which acts as the Proton acceptor.

The protein belongs to the uracil-DNA glycosylase (UDG) superfamily. UNG family.

Its subcellular location is the cytoplasm. The catalysed reaction is Hydrolyzes single-stranded DNA or mismatched double-stranded DNA and polynucleotides, releasing free uracil.. Excises uracil residues from the DNA which can arise as a result of misincorporation of dUMP residues by DNA polymerase or due to deamination of cytosine. In Chlamydia felis (strain Fe/C-56) (Chlamydophila felis), this protein is Uracil-DNA glycosylase.